Reading from the N-terminus, the 307-residue chain is Malate dehydrogenase (307 aa).

Residues 8–13 (GAGNVG) and aspartate 32 contribute to the NAD(+) site. Positions 81 and 87 each coordinate substrate. Residues asparagine 94 and 117–119 (VSN) each bind NAD(+). The substrate site is built by asparagine 119 and arginine 150. Histidine 174 functions as the Proton acceptor in the catalytic mechanism.

It belongs to the LDH/MDH superfamily. MDH type 3 family.

It catalyses the reaction (S)-malate + NAD(+) = oxaloacetate + NADH + H(+). Catalyzes the reversible oxidation of malate to oxaloacetate. This chain is Malate dehydrogenase, found in Dehalococcoides mccartyi (strain ATCC BAA-2266 / KCTC 15142 / 195) (Dehalococcoides ethenogenes (strain 195)).